The primary structure comprises 465 residues: Uridine kinase-like protein 5 (465 aa).

Positions 26–230 are uridine kinase; sequence LKQPFVIGVA…IVQHIRTKLC (205 aa). The uracil phosphoribosyltransferase stretch occupies residues 240–465; it reads NIFIISSTFQ…SLSTNLKLRS (226 aa). GTP contacts are provided by residues K264, R273, and 307–310; that span reads CKRL. Residues R317 and R342 each coordinate 5-phospho-alpha-D-ribose 1-diphosphate. R362 contributes to the GTP binding site. Residues D368, 373–376, and E439 each bind 5-phospho-alpha-D-ribose 1-diphosphate; that span reads SGYS. 438–440 is a binding site for uracil; it reads GEF.

The protein in the N-terminal section; belongs to the uridine kinase family. In the C-terminal section; belongs to the UPRTase family. Requires Mg(2+) as cofactor.

It catalyses the reaction UMP + diphosphate = 5-phospho-alpha-D-ribose 1-diphosphate + uracil. The enzyme catalyses cytidine + ATP = CMP + ADP + H(+). The catalysed reaction is uridine + ATP = UMP + ADP + H(+). The protein operates within pyrimidine metabolism; UMP biosynthesis via salvage pathway; UMP from uracil: step 1/1. It functions in the pathway pyrimidine metabolism; CTP biosynthesis via salvage pathway; CTP from cytidine: step 1/3. It participates in pyrimidine metabolism; UMP biosynthesis via salvage pathway; UMP from uridine: step 1/1. With respect to regulation, allosterically activated by GTP. Involved in the pyrimidine salvage pathway. The polypeptide is Uridine kinase-like protein 5 (UKL5) (Arabidopsis thaliana (Mouse-ear cress)).